A 267-amino-acid chain; its full sequence is MDVDERLHQDENQTHPFSQKKSSSFLIKEKAATKSKDLEHIRLRDLNFNHRKKLDDKKLAKQIPVKANFKKPNEIEARANLNSNELTDINLDYIPDSPSIEKISGPEDSIVVTPRNIIHLQSDSDIILEECEHNYDCSPFYRLFNYENRIEPDDYEAIINAIITDEIAGTYPVFERELEYQELKSLVRKRDYIMYYFLSRDYRGFFQLKEERTLFYRYPSIAYTSPLRYLDNGSETEQFTGDDDEELQSFDFENTSSVRTLDSNIWR.

Positions 1–13 (MDVDERLHQDENQ) are enriched in basic and acidic residues. Positions 1-26 (MDVDERLHQDENQTHPFSQKKSSSFL) are disordered. Residues 14 to 25 (THPFSQKKSSSF) show a composition bias toward polar residues.

In terms of biological role, indispensable for spore formation. The protein is Meiosis-specific protein ISC10 (ISC10) of Saccharomyces cerevisiae (strain ATCC 204508 / S288c) (Baker's yeast).